A 118-amino-acid polypeptide reads, in one-letter code: Small ribosomal subunit protein uS13 (118 aa).

The interval 94–118 (SLPLRGQRTKTNARTRKGPRKPIKK) is disordered.

It belongs to the universal ribosomal protein uS13 family. As to quaternary structure, part of the 30S ribosomal subunit. Forms a loose heterodimer with protein S19. Forms two bridges to the 50S subunit in the 70S ribosome.

Located at the top of the head of the 30S subunit, it contacts several helices of the 16S rRNA. In the 70S ribosome it contacts the 23S rRNA (bridge B1a) and protein L5 of the 50S subunit (bridge B1b), connecting the 2 subunits; these bridges are implicated in subunit movement. Contacts the tRNAs in the A and P-sites. The polypeptide is Small ribosomal subunit protein uS13 (Shewanella amazonensis (strain ATCC BAA-1098 / SB2B)).